We begin with the raw amino-acid sequence, 431 residues long: Adenylosuccinate synthetase (431 aa).

Residues 13–19 (GDEGKGK) and 41–43 (GHT) each bind GTP. The active-site Proton acceptor is Asp-14. Mg(2+) contacts are provided by Asp-14 and Gly-41. IMP-binding positions include 14–17 (DEGK), 39–42 (NAGH), Thr-130, Arg-144, Gln-225, Thr-240, and Arg-306. His-42 serves as the catalytic Proton donor. 302–308 (ATTGRQR) is a binding site for substrate. GTP-binding positions include Arg-308, 334–336 (KLD), and 416–418 (STG).

The protein belongs to the adenylosuccinate synthetase family. As to quaternary structure, homodimer. Mg(2+) is required as a cofactor.

The protein resides in the cytoplasm. The catalysed reaction is IMP + L-aspartate + GTP = N(6)-(1,2-dicarboxyethyl)-AMP + GDP + phosphate + 2 H(+). It participates in purine metabolism; AMP biosynthesis via de novo pathway; AMP from IMP: step 1/2. Functionally, plays an important role in the de novo pathway of purine nucleotide biosynthesis. Catalyzes the first committed step in the biosynthesis of AMP from IMP. This Halorhodospira halophila (strain DSM 244 / SL1) (Ectothiorhodospira halophila (strain DSM 244 / SL1)) protein is Adenylosuccinate synthetase.